Here is a 365-residue protein sequence, read N- to C-terminus: Keratin-associated protein 10-6 (365 aa).

Tandem repeats lie at residues 41–45 (CCEPP), 46–50 (CCAPA), 67–71 (CCPVT), 89–93 (CCQQS), 99–103 (CCASS), 109–113 (CCVPV), 114–118 (CCKTV), 119–123 (CCKPV), 124–128 (CCVSV), 129–133 (CCGDS), 135–139 (CCQQS), 145–149 (CCTSS), 155–159 (CCVPV), 160–164 (CCKPV), 172–176 (CCQQS), 186–190 (CCQAV), 208–212 (CCQQS), 218–222 (CCTSS), 228–232 (CCVPV), 233–237 (CCVPV), 238–242 (CCVPT), 250–254 (CCQQS), 260–264 (CCTSS), 270–274 (CCVPV), 282–286 (CCQQS), 292–296 (CCTAS), 297–301 (CCRSS), 316–320 (CCVPV), and 334–338 (CCRTA). Residues 41 to 338 (CCEPPCCAPA…SCQPSCCRTA (298 aa)) form a 29 X 5 AA repeats of C-C-X(3) region.

The protein belongs to the KRTAP type 10 family. Interacts with hair keratins. Restricted to a narrow region of the hair fiber cuticle, lying approximately 20 cell layers above the apex of the dermal papilla of the hair root; not detected in any other tissues.

Its function is as follows. In the hair cortex, hair keratin intermediate filaments are embedded in an interfilamentous matrix, consisting of hair keratin-associated proteins (KRTAP), which are essential for the formation of a rigid and resistant hair shaft through their extensive disulfide bond cross-linking with abundant cysteine residues of hair keratins. The matrix proteins include the high-sulfur and high-glycine-tyrosine keratins. The polypeptide is Keratin-associated protein 10-6 (KRTAP10-6) (Homo sapiens (Human)).